Consider the following 270-residue polypeptide: Cell division protein DivIB (270 aa).

The Cytoplasmic portion of the chain corresponds to M1–H28. A helical membrane pass occupies residues L29–P49. Residues L50–E270 lie on the Extracellular side of the membrane. The region spanning S51 to F119 is the POTRA domain.

The protein belongs to the FtsQ/DivIB family. DivIB subfamily.

The protein resides in the cell membrane. Cell division protein that may be involved in stabilizing or promoting the assembly of the division complex. The chain is Cell division protein DivIB from Listeria monocytogenes serovar 1/2a (strain ATCC BAA-679 / EGD-e).